The chain runs to 275 residues: NADPH-dependent 7-cyano-7-deazaguanine reductase (275 aa).

Position 81-83 (81-83 (IES)) interacts with substrate. Residue 83–84 (SK) participates in NADPH binding. The active-site Thioimide intermediate is the Cys181. Asp188 acts as the Proton donor in catalysis. Residue 220–221 (HE) coordinates substrate. 249–250 (RG) is an NADPH binding site.

It belongs to the GTP cyclohydrolase I family. QueF type 2 subfamily. In terms of assembly, homodimer.

It is found in the cytoplasm. The catalysed reaction is 7-aminomethyl-7-carbaguanine + 2 NADP(+) = 7-cyano-7-deazaguanine + 2 NADPH + 3 H(+). It functions in the pathway tRNA modification; tRNA-queuosine biosynthesis. Catalyzes the NADPH-dependent reduction of 7-cyano-7-deazaguanine (preQ0) to 7-aminomethyl-7-deazaguanine (preQ1). The chain is NADPH-dependent 7-cyano-7-deazaguanine reductase from Xylella fastidiosa (strain M23).